The sequence spans 275 residues: N-acetyltransferase YodP (275 aa).

In terms of domain architecture, N-acetyltransferase spans 125–271; that stretch reads FTMRKAETND…AEGLENMNIW (147 aa).

This sequence belongs to the acetyltransferase family.

It catalyses the reaction (3S)-3,6-diaminohexanoate + acetyl-CoA = (3S)-6-acetamido-3-aminohexanoate + CoA + H(+). In terms of biological role, in vitro, is able to catalyze the acetylation of beta-lysine to N6-acetyl-beta-lysine, an archaeal osmolyte produced by methanogenic archaea. Its physiological function has not yet been elucidated. This Bacillus subtilis (strain 168) protein is N-acetyltransferase YodP (yodP).